Reading from the N-terminus, the 187-residue chain is Peptidyl-tRNA hydrolase (187 aa).

Tyr15 contributes to the tRNA binding site. His20 functions as the Proton acceptor in the catalytic mechanism. Positions 64, 66, and 112 each coordinate tRNA.

This sequence belongs to the PTH family. In terms of assembly, monomer.

The protein localises to the cytoplasm. The enzyme catalyses an N-acyl-L-alpha-aminoacyl-tRNA + H2O = an N-acyl-L-amino acid + a tRNA + H(+). In terms of biological role, hydrolyzes ribosome-free peptidyl-tRNAs (with 1 or more amino acids incorporated), which drop off the ribosome during protein synthesis, or as a result of ribosome stalling. Functionally, catalyzes the release of premature peptidyl moieties from peptidyl-tRNA molecules trapped in stalled 50S ribosomal subunits, and thus maintains levels of free tRNAs and 50S ribosomes. The polypeptide is Peptidyl-tRNA hydrolase (Phocaeicola vulgatus (strain ATCC 8482 / DSM 1447 / JCM 5826 / CCUG 4940 / NBRC 14291 / NCTC 11154) (Bacteroides vulgatus)).